We begin with the raw amino-acid sequence, 204 residues long: High frequency lysogenization protein HflD homolog (204 aa).

It belongs to the HflD family.

The protein localises to the cytoplasm. Its subcellular location is the cell inner membrane. The polypeptide is High frequency lysogenization protein HflD homolog (Shewanella amazonensis (strain ATCC BAA-1098 / SB2B)).